The primary structure comprises 292 residues: 2-methylisocitrate lyase (292 aa).

44 to 46 (SGA) provides a ligand contact to substrate. Positions 84 and 86 each coordinate Mg(2+). Substrate is bound by residues 121 to 122 (CG), R156, E186, 208 to 210 (NMT), R239, and R268.

The protein belongs to the isocitrate lyase/PEP mutase superfamily. Methylisocitrate lyase family. In terms of assembly, homotetramer; dimer of dimers. Requires Mg(2+) as cofactor.

It carries out the reaction (2S,3R)-3-hydroxybutane-1,2,3-tricarboxylate = pyruvate + succinate. Its pathway is organic acid metabolism; propanoate degradation. Involved in the catabolism of short chain fatty acids (SCFA) via the 2-methylcitrate cycle I (propionate degradation route). Catalyzes the thermodynamically favored C-C bond cleavage of (2R,3S)-2-methylisocitrate to yield pyruvate and succinate via an alpha-carboxy-carbanion intermediate. This Shewanella oneidensis (strain ATCC 700550 / JCM 31522 / CIP 106686 / LMG 19005 / NCIMB 14063 / MR-1) protein is 2-methylisocitrate lyase.